Consider the following 337-residue polypeptide: Low-density lipoprotein receptor class A domain-containing protein 3 (337 aa).

Positions 1 to 13 are cleaved as a signal peptide; sequence MWLLYLILGSVES. The Extracellular portion of the chain corresponds to 14 to 169; the sequence is QLLPGNNHTT…NQLLYYPSIT (156 aa). Asparagine 20 carries N-linked (GlcNAc...) asparagine glycosylation. LDL-receptor class A domains are found at residues 24–61, 66–103, and 108–144; these read ECNI…KECP, RCGP…ENCT, and LCSN…EHCH. 9 cysteine pairs are disulfide-bonded: cysteine 25-cysteine 38, cysteine 33-cysteine 51, cysteine 45-cysteine 60, cysteine 67-cysteine 80, cysteine 74-cysteine 93, cysteine 87-cysteine 102, cysteine 109-cysteine 121, cysteine 116-cysteine 134, and cysteine 128-cysteine 143. N-linked (GlcNAc...) asparagine glycosylation occurs at asparagine 101. Residues 170-190 traverse the membrane as a helical segment; the sequence is YTIIGSSVIFVLVVALLALVL. The Cytoplasmic portion of the chain corresponds to 191–337; the sequence is HHQRKRNLMS…DDLPSTEVDV (147 aa). Polar residues predominate over residues 243-253; that stretch reads QQPVSVESPPS. The tract at residues 243–337 is disordered; the sequence is QQPVSVESPP…DDLPSTEVDV (95 aa). The span at 291–303 shows a compositional bias: low complexity; it reads RSRTGSSASAGST.

It belongs to the LDLR family.

The protein resides in the cell membrane. The sequence is that of Low-density lipoprotein receptor class A domain-containing protein 3 from Xenopus tropicalis (Western clawed frog).